The chain runs to 222 residues: Deoxyribose-phosphate aldolase (222 aa).

Asp90 (proton donor/acceptor) is an active-site residue. The Schiff-base intermediate with acetaldehyde role is filled by Lys152. The Proton donor/acceptor role is filled by Lys181.

This sequence belongs to the DeoC/FbaB aldolase family. DeoC type 1 subfamily.

It localises to the cytoplasm. It catalyses the reaction 2-deoxy-D-ribose 5-phosphate = D-glyceraldehyde 3-phosphate + acetaldehyde. It functions in the pathway carbohydrate degradation; 2-deoxy-D-ribose 1-phosphate degradation; D-glyceraldehyde 3-phosphate and acetaldehyde from 2-deoxy-alpha-D-ribose 1-phosphate: step 2/2. Catalyzes a reversible aldol reaction between acetaldehyde and D-glyceraldehyde 3-phosphate to generate 2-deoxy-D-ribose 5-phosphate. The sequence is that of Deoxyribose-phosphate aldolase from Pectobacterium atrosepticum (strain SCRI 1043 / ATCC BAA-672) (Erwinia carotovora subsp. atroseptica).